We begin with the raw amino-acid sequence, 163 residues long: Sperm acrosome membrane-associated protein 3 (163 aa).

An N-terminal signal peptide occupies residues 1-35 (MEAGSWAPRRWPRPPGIVLLALASVLSSLLSSGQA). The C-type lysozyme domain maps to 36 to 163 (RVYSRCELAR…LSDWVDGCEL (128 aa)). 4 disulfide bridges follow: Cys41–Cys161, Cys65–Cys149, Cys99–Cys114, and Cys110–Cys128.

This sequence belongs to the glycosyl hydrolase 22 family. As to quaternary structure, interacts with ASTL.

Its subcellular location is the secreted. Functionally, sperm surface membrane protein that may be involved in sperm-egg plasma membrane adhesion and fusion during fertilization. It could be a potential receptor for the egg oligosaccharide residue N-acetylglucosamine, which is present in the extracellular matrix over the egg plasma membrane. The processed form has no detectable bacteriolytic activity in vitro. The polypeptide is Sperm acrosome membrane-associated protein 3 (SPACA3) (Bos taurus (Bovine)).